The chain runs to 419 residues: UDP-N-acetylglucosamine 1-carboxyvinyltransferase (419 aa).

Phosphoenolpyruvate is bound at residue 22–23; sequence KN. Arg-91 provides a ligand contact to UDP-N-acetyl-alpha-D-glucosamine. Residue Cys-115 is the Proton donor of the active site. Cys-115 is subject to 2-(S-cysteinyl)pyruvic acid O-phosphothioketal. UDP-N-acetyl-alpha-D-glucosamine is bound by residues 120 to 124, 160 to 163, Asp-305, and Ile-327; these read RPVDL and KVSV.

This sequence belongs to the EPSP synthase family. MurA subfamily.

Its subcellular location is the cytoplasm. The enzyme catalyses phosphoenolpyruvate + UDP-N-acetyl-alpha-D-glucosamine = UDP-N-acetyl-3-O-(1-carboxyvinyl)-alpha-D-glucosamine + phosphate. The protein operates within cell wall biogenesis; peptidoglycan biosynthesis. Cell wall formation. Adds enolpyruvyl to UDP-N-acetylglucosamine. This chain is UDP-N-acetylglucosamine 1-carboxyvinyltransferase, found in Tolumonas auensis (strain DSM 9187 / NBRC 110442 / TA 4).